The sequence spans 126 residues: Large ribosomal subunit protein bL12c (126 aa).

The protein belongs to the bacterial ribosomal protein bL12 family. Homodimer. Part of the ribosomal stalk of the 50S ribosomal subunit. Forms a multimeric L10(L12)X complex, where L10 forms an elongated spine to which 2 to 4 L12 dimers bind in a sequential fashion. Binds GTP-bound translation factors.

It is found in the plastid. Its subcellular location is the cyanelle. Functionally, forms part of the ribosomal stalk which helps the ribosome interact with GTP-bound translation factors. Is thus essential for accurate translation. This chain is Large ribosomal subunit protein bL12c, found in Cyanophora paradoxa.